The following is a 229-amino-acid chain: NAD-dependent protein deacetylase (229 aa).

Residues 1-229 enclose the Deacetylase sirtuin-type domain; it reads MNKLNEALKK…SDAVKVFEEI (229 aa). NAD(+)-binding residues include Ala-20, Arg-32, Gln-96, Ile-98, Asp-99, His-114, Thr-181, Ser-182, Asn-205, and Val-223. Nicotinamide is bound by residues Ile-98 and Asp-99. The active-site Proton acceptor is the His-114.

Belongs to the sirtuin family. Class U subfamily.

Its subcellular location is the cytoplasm. The enzyme catalyses N(6)-acetyl-L-lysyl-[protein] + NAD(+) + H2O = 2''-O-acetyl-ADP-D-ribose + nicotinamide + L-lysyl-[protein]. Functionally, NAD-dependent protein deacetylase which modulates the activities of several enzymes which are inactive in their acetylated form. This Listeria monocytogenes serovar 1/2a (strain ATCC BAA-679 / EGD-e) protein is NAD-dependent protein deacetylase.